A 192-amino-acid polypeptide reads, in one-letter code: MDTSRLTLDHFLSRFQLLRPQITHETLNQRQAAVLIPVVRRPQPGLLLTQRAIHLRKHAGQVAFPGGAVDSTDASLIAAALREAQEEVAIPPQAVEVIGVLPPVDSVTGFQVTPVVGIIPPNLPWRASEDEVSAVFEMPLAQALQLGRYHPLDVYRRGNSHRVWLSWYEHYFVWGMTANILRELALQIGVKP.

One can recognise a Nudix hydrolase domain in the interval 29-160 (QRQAAVLIPV…PLDVYRRGNS (132 aa)). A Nudix box motif is present at residues 67 to 89 (GAVDSTDASLIAAALREAQEEVA). 2 residues coordinate Mg(2+): Glu-83 and Glu-87.

The protein belongs to the Nudix hydrolase family. PCD1 subfamily. The cofactor is Mn(2+). Mg(2+) is required as a cofactor.

Functionally, probably mediates the hydrolysis of some nucleoside diphosphate derivatives. This is an uncharacterized protein from Salmonella agona (strain SL483).